Here is a 457-residue protein sequence, read N- to C-terminus: SH3 domain-binding protein 5 (457 aa).

Residues 1-12 (MDTALKRSRSEE) are compositionally biased toward basic and acidic residues. The tract at residues 1-68 (MDTALKRSRS…DDINRRETEL (68 aa)) is disordered. The segment covering 25-43 (EKEEEEERMEQGLEEEEEV) has biased composition (acidic residues). The interval 33–267 (MEQGLEEEEE…EIHERRRSNA (235 aa)) is sufficient for interaction with RAB11A and for guanine nucleotide exchange activity. A compositionally biased stretch (basic and acidic residues) spans 44-53 (DPRIQGELEK). Coiled-coil stretches lie at residues 46–92 (RIQG…LAKK), 99–147 (DSKP…RLLE), 156–202 (AWQE…LEKK), and 213–257 (YFEL…RISD). The segment covering 308-319 (NCGNLVSEDDSE) has biased composition (acidic residues). Residues 308 to 347 (NCGNLVSEDDSETQSVSSFSSGPTSPSEMPDQFPAVARPG) are disordered. The span at 322–334 (SVSSFSSGPTSPS) shows a compositional bias: low complexity. Ser353 is subject to Phosphoserine; by MAPK12 and MAPK9. Residues 371–427 (SECSGASSPECEVERGDRAEGAENKMSDKANNNRVLSSTSAGGGRSRSQSSTSLEGQ) are disordered. Ser377 and Ser378 each carry phosphoserine. Residues 382-398 (EVERGDRAEGAENKMSD) show a composition bias toward basic and acidic residues. The segment covering 406–427 (LSSTSAGGGRSRSQSSTSLEGQ) has biased composition (low complexity). Ser420 carries the phosphoserine modification. Residue Ser423 is modified to Phosphoserine; by MAPK12.

This sequence belongs to the SH3BP5 family. In terms of assembly, interacts with BTK. Interacts with all isoforms of MAPK8, MAPK9, MAPK10 and MAPK12. Interacts with GDP-bound and nucleotide-free forms of RAB11A.

It is found in the cytoplasmic vesicle membrane. Its subcellular location is the mitochondrion. In terms of biological role, functions as a guanine nucleotide exchange factor (GEF) with specificity for RAB11A and RAB25. Inhibits the auto- and transphosphorylation activity of BTK. Plays a negative regulatory role in BTK-related cytoplasmic signaling in B-cells. May be involved in BCR-induced apoptotic cell death. In Rattus norvegicus (Rat), this protein is SH3 domain-binding protein 5 (Sh3bp5).